We begin with the raw amino-acid sequence, 332 residues long: Terpene synthase 1 (332 aa).

Positions 81–86 match the DDxx(x)D/E motif motif; the sequence is DDGLDA. Residues 221–229 carry the NDxxSxxxD/E motif motif; the sequence is NDLVSYEKE.

This sequence belongs to the terpene synthase family.

The enzyme catalyses (2E,6E)-farnesyl diphosphate = (2S,3R,6S,9S)-(-)-protoillud-7-ene + diphosphate. Its function is as follows. Terpene synthase that converts its substrate farnesyl diphosphate (FPP) into the sesquiterpene protoillud-7-ene. The polypeptide is Terpene synthase 1 (Acytostelium subglobosum (Slime mold)).